The primary structure comprises 898 residues: Interleukin enhancer-binding factor 3-B (898 aa).

Residues 5–379 enclose the DZF domain; it reads RIFLNDDRHV…ALKRPIEEDG (375 aa). Disordered regions lie at residues 52-87, 374-403, 468-529, 627-651, and 711-799; these read QEKD…NPTR, PIEE…PPQA, LPTG…VMEL, PPPQ…RGGF, and GEGY…QGAA. The segment covering 61–71 has biased composition (acidic residues); the sequence is ENPEPEETETT. Basic and acidic residues-rich tracts occupy residues 72-81 and 374-384; these read EEGKDSEAKT and PIEEDGEDKSP. The Bipartite nuclear localization signal motif lies at 372-390; sequence KRPIEEDGEDKSPSKKKKK. One can recognise a DRBM 1 domain in the interval 399–468; it reads EPPQAMNALM…AVKVLQDMGL (70 aa). The span at 474–483 shows a compositional bias: acidic residues; the sequence is EKEESVDESE. The segment covering 489 to 513 has biased composition (polar residues); it reads QTPSQTADSEQADSSAGDQSESGKQ. The DRBM 2 domain maps to 521–587; it reads HGKNPVMELN…ALSALEKLFP (67 aa). The span at 637–651 shows a compositional bias: gly residues; that stretch reads RGGMNRGRGRGRGGF. Residues 717–747 show a composition bias toward pro residues; it reads PTPPKPFVKKPPPPQQQQQPPPQHASNPPKP. The segment covering 749–782 has biased composition (low complexity); that stretch reads YNQGYQGHQGGQQQQQPQQQQQQTYNQNQYSNYG.

A component of a ybx2/frgy2-containing mRNA-ribonucleoprotein (mRNP) complex. Also a component of the CCAAT box transcription factor (CBTF) complex. Phosphorylated. Phosphorylation affects nuclear translocation. In terms of processing, methylated by protein arginine N-methyltransferase 1 (prmt1b) in the RGG-rich domain. Methylation decreases DNA-binding and thereby decreases transcription of the gata2 gene, but does not regulate dsRNA binding or subcellular localization.

It localises to the nucleus. Its subcellular location is the cytoplasm. In terms of biological role, RNA-binding protein that plays an essential role in the biogenesis of circular RNAs (circRNAs) which are produced by back-splicing circularization of pre-mRNAs. Within the nucleus, promotes circRNAs processing by stabilizing the regulatory elements residing in the flanking introns of the circularized exons. Plays thereby a role in the back-splicing of a subset of circRNAs. As a consequence, participates in a wide range of transcriptional and post-transcriptional processes. Binds to poly-U elements and AU-rich elements (AREs) in the 3'-UTR of target mRNAs. Upon viral infection, ILF3 accumulates in the cytoplasm and participates in the innate antiviral response. Mechanistically, ILF3 becomes phosphorylated and activated by the double-stranded RNA-activated protein kinase/PKR which releases ILF3 from cellular mature circRNAs. In turn, unbound ILF3 molecules are able to interact with and thus inhibit viral mRNAs. Has a cytoplasmic role early in development as part of a ribonucleoprotein (mRNP) complex which may regulate mRNA transport and/or translation. Following nuclear localization at the mid-blastula transition, acts as a transcription factor and binds the 5'-CCAAT-3' promoter sequence to regulate transcription of the gata2 gene as a subunit of the CCAAT box transcription factor (CBTF). Its role as an mRNP component negatively regulates its activity as a transcription factor by precluding its nuclear localization. This chain is Interleukin enhancer-binding factor 3-B (ilf3-b), found in Xenopus laevis (African clawed frog).